A 443-amino-acid polypeptide reads, in one-letter code: Threonine/serine transporter TdcC (443 aa).

Helical transmembrane passes span 22-42, 44-64, 97-117, 140-160, 163-183, 207-227, 259-279, 319-339, 366-386, 389-409, and 423-443; these read TTWTLGLFGTAIGAGVLFFPI, AGFGGLIPILLMLVLAYPIAF, GVVITFLYFFAICPLLWIYGV, FVALFLLLLMAFVIWFGKDLM, VMSYLVWPFIASLVLISLSLI, ILVTVWLGISIMVFSFNFSPI, ASMLMVAVVMFFAFSCLFTLS, ASIIALVAIFKSFFGHYLGTL, ISMIFIMGSTWVVAYANPNIL, IEAMGAPIIASLLCLLPMYAI, and DNVFVTLIGLLTILNIVYKLF.

It belongs to the amino acid/polyamine transporter 2 family. SdaC/TdcC subfamily.

The protein resides in the cell inner membrane. The enzyme catalyses L-threonine(in) + H(+)(in) = L-threonine(out) + H(+)(out). It carries out the reaction L-serine(in) + H(+)(in) = L-serine(out) + H(+)(out). Its function is as follows. Involved in the import of threonine and serine into the cell, with the concomitant import of a proton (symport system). This chain is Threonine/serine transporter TdcC, found in Salmonella paratyphi A (strain ATCC 9150 / SARB42).